Reading from the N-terminus, the 435-residue chain is Serine--tRNA ligase (435 aa).

242–244 (TAE) serves as a coordination point for L-serine. 273–275 (RSE) lines the ATP pocket. Glu-296 provides a ligand contact to L-serine. 360 to 363 (EISS) serves as a coordination point for ATP. Ser-396 provides a ligand contact to L-serine.

This sequence belongs to the class-II aminoacyl-tRNA synthetase family. Type-1 seryl-tRNA synthetase subfamily. Homodimer. The tRNA molecule binds across the dimer.

It localises to the cytoplasm. The catalysed reaction is tRNA(Ser) + L-serine + ATP = L-seryl-tRNA(Ser) + AMP + diphosphate + H(+). It carries out the reaction tRNA(Sec) + L-serine + ATP = L-seryl-tRNA(Sec) + AMP + diphosphate + H(+). Its pathway is aminoacyl-tRNA biosynthesis; selenocysteinyl-tRNA(Sec) biosynthesis; L-seryl-tRNA(Sec) from L-serine and tRNA(Sec): step 1/1. In terms of biological role, catalyzes the attachment of serine to tRNA(Ser). Is also able to aminoacylate tRNA(Sec) with serine, to form the misacylated tRNA L-seryl-tRNA(Sec), which will be further converted into selenocysteinyl-tRNA(Sec). This chain is Serine--tRNA ligase, found in Vibrio parahaemolyticus serotype O3:K6 (strain RIMD 2210633).